An 827-amino-acid chain; its full sequence is Glycerol-3-phosphate acyltransferase (827 aa).

Residues 309-314 (CHRSHI) carry the HXXXXD motif motif.

Belongs to the GPAT/DAPAT family.

The protein localises to the cell inner membrane. It carries out the reaction sn-glycerol 3-phosphate + an acyl-CoA = a 1-acyl-sn-glycero-3-phosphate + CoA. Its pathway is phospholipid metabolism; CDP-diacylglycerol biosynthesis; CDP-diacylglycerol from sn-glycerol 3-phosphate: step 1/3. This Ectopseudomonas mendocina (strain ymp) (Pseudomonas mendocina) protein is Glycerol-3-phosphate acyltransferase.